A 104-amino-acid chain; its full sequence is Defensin-2 (104 aa).

The signal sequence occupies residues 1–19 (MKFFVLFAILIAIVHASCA). 3 disulfide bridges follow: Cys-64/Cys-95, Cys-81/Cys-100, and Cys-85/Cys-102.

This sequence belongs to the invertebrate defensin family. Type 1 subfamily. In terms of tissue distribution, low expression in head and thorax.

It is found in the secreted. In terms of biological role, antibacterial peptide mostly active against Gram-positive bacteria. The polypeptide is Defensin-2 (Apis mellifera (Honeybee)).